A 394-amino-acid polypeptide reads, in one-letter code: Phosphoglycerate kinase (394 aa).

Substrate is bound by residues Asp-21–Asn-23, Arg-36, His-59–Arg-62, Arg-118, and Arg-151. Residues Lys-202, Glu-324, and Gly-350–Ser-353 contribute to the ATP site.

Belongs to the phosphoglycerate kinase family. Monomer.

The protein localises to the cytoplasm. The catalysed reaction is (2R)-3-phosphoglycerate + ATP = (2R)-3-phospho-glyceroyl phosphate + ADP. Its pathway is carbohydrate degradation; glycolysis; pyruvate from D-glyceraldehyde 3-phosphate: step 2/5. The polypeptide is Phosphoglycerate kinase (Exiguobacterium sibiricum (strain DSM 17290 / CCUG 55495 / CIP 109462 / JCM 13490 / 255-15)).